Consider the following 493-residue polypeptide: Fizzy-related protein homolog (493 aa).

3 disordered regions span residues 31–51 (LTPA…FIPS), 64–88 (INEN…GKDG), and 105–166 (EKVQ…SPRK). T32 is subject to Phosphothreonine. Residues 32–42 (TPANSPVSSPS) show a composition bias toward polar residues. Residue S36 is modified to Phosphoserine. Residue K69 is modified to N6-acetyllysine. 2 stretches are compositionally biased toward basic and acidic residues: residues 76-86 (KAKDATSDNGK) and 106-126 (KVQD…EHKG). Phosphoserine is present on residues S133, S138, S146, and S151. Positions 146 to 160 (SPYSLSPVSNKSQKL) are enriched in polar residues. K159 bears the N6-acetyllysine mark. WD repeat units follow at residues 182-222 (PELQ…VTRL), 227-266 (VEGD…KLSM), 269-306 (GHTA…LQSE), 311-350 (GHRQ…PVQQ), 353-395 (EHLA…PLQC), 397-438 (DTGS…QVAK), and 441-480 (GHSY…RSTK).

This sequence belongs to the WD repeat CDC20/Fizzy family. The unphosphorylated form interacts with APC/C during mitosis. Interacts with NINL. Interacts (in complex with the anaphase promoting complex APC) with MAD2L2; inhibits FZR1-mediated APC/C activation. Interacts with SIRT2. Interacts with USP37. Interacts (via WD repeats) with MAK. Interacts with RBBP8/CtIP; this interaction leads to RBBP8 proteasomal degradation. Interacts with HECW2. Interacts with SASS6; the interaction is regulated by CENATAC and leads to SASS6 proteasomal degradation. Interacts (via N-terminus) with CCNF. Interacts with CDC6. Interacts with TK1 (via the KEN box). In terms of processing, acetylated. Deacetylated by SIRT2 at Lys-69 and Lys-159; deacetylation enhances the interaction of FZR1 with CDC27, leading to activation of anaphase promoting complex/cyclosome (APC/C). Post-translationally, following DNA damage, it is dephosphorylated by CDC14B in G2 phase, leading to its reassociation with the APC/C, and allowing an efficient G2 DNA damage checkpoint. Phosphorylated by MAK.

The protein operates within protein modification; protein ubiquitination. In terms of biological role, substrate-specific adapter for the anaphase promoting complex/cyclosome (APC/C) E3 ubiquitin-protein ligase complex. Associates with the APC/C in late mitosis, in replacement of CDC20, and activates the APC/C during anaphase and telophase. The APC/C remains active in degrading substrates to ensure that positive regulators of the cell cycle do not accumulate prematurely. At the G1/S transition FZR1 is phosphorylated, leading to its dissociation from the APC/C. Following DNA damage, it is required for the G2 DNA damage checkpoint: its dephosphorylation and reassociation with the APC/C leads to the ubiquitination of PLK1, preventing entry into mitosis. Acts as an adapter for APC/C to target the DNA-end resection factor RBBP8/CtIP for ubiquitination and subsequent proteasomal degradation. Through the regulation of RBBP8/CtIP protein turnover, may play a role in DNA damage response, favoring DNA double-strand repair through error-prone non-homologous end joining (NHEJ) over error-free, RBBP8-mediated homologous recombination (HR). This is Fizzy-related protein homolog (Fzr1) from Mus musculus (Mouse).